Reading from the N-terminus, the 526-residue chain is Probable rhamnogalacturonase B (526 aa).

Positions 1 to 20 are cleaved as a signal peptide; it reads MHVNTLSVLSLVGLVPLAAA. Cys-41 and Cys-67 are disulfide-bonded. Residue Asn-144 is glycosylated (N-linked (GlcNAc...) asparagine). Asp-218 functions as the Proton donor in the catalytic mechanism. Cys-220 and Cys-237 form a disulfide bridge. Asn-238 and Asn-253 each carry an N-linked (GlcNAc...) asparagine glycan. Residue His-293 is part of the active site. Asn-320 is a glycosylation site (N-linked (GlcNAc...) asparagine). 2 cysteine pairs are disulfide-bonded: Cys-343–Cys-349 and Cys-371–Cys-380.

It belongs to the glycosyl hydrolase 28 family.

It is found in the secreted. The catalysed reaction is Endohydrolysis of alpha-D-GalA-(1-&gt;2)-alpha-L-Rha glycosidic bond in the rhamnogalacturonan I backbone with initial inversion of anomeric configuration releasing oligosaccharides with beta-D-GalA at the reducing end.. Pectinolytic enzymes consist of four classes of enzymes: pectine lyase, polygalacturonase, pectin methylesterase and rhamnogalacturonase. Hydrolyzes alpha-D-galacturonopyranosyl-(1,2)-alpha-L-rhamnopyranosyl linkages in the backbone of the hairy regions of pectins. The protein is Probable rhamnogalacturonase B (rhgB) of Aspergillus terreus (strain NIH 2624 / FGSC A1156).